The sequence spans 111 residues: Probable 4-amino-4-deoxy-L-arabinose-phosphoundecaprenol flippase subunit ArnE (111 aa).

At 1-37 the chain is on the cytoplasmic side; sequence MIWLVLILASLLSVTGQLCQKQATRPVAINKRRKHIA. A helical transmembrane segment spans residues 38–58; sequence LWLGLGLVCLGLAMVLWLLVL. The EamA domain occupies 40-109; sequence LGLGLVCLGL…IIGGIVILGS (70 aa). The Periplasmic portion of the chain corresponds to 59–60; that stretch reads QT. The chain crosses the membrane as a helical span at residues 61–81; that stretch reads VPVGIAYPMLSLNFVWVTLAA. Residues 82 to 87 are Cytoplasmic-facing; the sequence is TKLWHE. Residues 88–108 form a helical membrane-spanning segment; the sequence is PVSFRHWCGVAFIIGGIVILG. At 109-111 the chain is on the periplasmic side; that stretch reads STV.

Belongs to the ArnE family. As to quaternary structure, heterodimer of ArnE and ArnF.

It localises to the cell inner membrane. It functions in the pathway bacterial outer membrane biogenesis; lipopolysaccharide biosynthesis. Its function is as follows. Translocates 4-amino-4-deoxy-L-arabinose-phosphoundecaprenol (alpha-L-Ara4N-phosphoundecaprenol) from the cytoplasmic to the periplasmic side of the inner membrane. In Escherichia fergusonii (strain ATCC 35469 / DSM 13698 / CCUG 18766 / IAM 14443 / JCM 21226 / LMG 7866 / NBRC 102419 / NCTC 12128 / CDC 0568-73), this protein is Probable 4-amino-4-deoxy-L-arabinose-phosphoundecaprenol flippase subunit ArnE.